A 470-amino-acid chain; its full sequence is uncharacterized protein (470 aa).

The signal sequence occupies residues 1-24 (MKKLVGSLAAISVLSATGFSYVGY).

This is an uncharacterized protein from Mycoplasma capricolum subsp. capricolum (strain California kid / ATCC 27343 / NCTC 10154).